The chain runs to 238 residues: 1-(5-phosphoribosyl)-5-[(5-phosphoribosylamino)methylideneamino] imidazole-4-carboxamide isomerase (238 aa).

The active-site Proton acceptor is D8. D130 serves as the catalytic Proton donor.

It belongs to the HisA/HisF family.

The protein localises to the cytoplasm. It carries out the reaction 1-(5-phospho-beta-D-ribosyl)-5-[(5-phospho-beta-D-ribosylamino)methylideneamino]imidazole-4-carboxamide = 5-[(5-phospho-1-deoxy-D-ribulos-1-ylimino)methylamino]-1-(5-phospho-beta-D-ribosyl)imidazole-4-carboxamide. The protein operates within amino-acid biosynthesis; L-histidine biosynthesis; L-histidine from 5-phospho-alpha-D-ribose 1-diphosphate: step 4/9. This chain is 1-(5-phosphoribosyl)-5-[(5-phosphoribosylamino)methylideneamino] imidazole-4-carboxamide isomerase, found in Methanococcus maripaludis (strain C5 / ATCC BAA-1333).